We begin with the raw amino-acid sequence, 107 residues long: Serine-rich and transmembrane domain-containing protein 1 (107 aa).

A helical transmembrane segment spans residues 43-63; that stretch reads IYVSIFLSLLAFLLLLLIIAL.

Its subcellular location is the membrane. In Homo sapiens (Human), this protein is Serine-rich and transmembrane domain-containing protein 1 (SERTM1).